The primary structure comprises 715 residues: ATP-dependent DNA helicase Hel308 (715 aa).

The Q motif motif lies at 1 to 29 (MKVEELRIDERIKEVLKKRGISELYPPQA). Residues Q28 and 46 to 53 (IPTASGKT) each bind ATP. Residues 33 to 197 (TSGILKGENA…WLNAKLIKSD (165 aa)) form the Helicase ATP-binding domain. Positions 145 to 148 (DEIH) match the DEAH box motif. The 194-residue stretch at 229 to 422 (LVYDAIKRSK…ILRGQILALI (194 aa)) folds into the Helicase C-terminal domain.

The protein belongs to the helicase family. Hel308 subfamily. As to quaternary structure, monomer.

The enzyme catalyses Couples ATP hydrolysis with the unwinding of duplex DNA by translocating in the 3'-5' direction.. The catalysed reaction is ATP + H2O = ADP + phosphate + H(+). DNA-dependent ATPase and 3'-5' DNA helicase that may be involved in repair of stalled replication forks. The chain is ATP-dependent DNA helicase Hel308 from Pyrococcus horikoshii (strain ATCC 700860 / DSM 12428 / JCM 9974 / NBRC 100139 / OT-3).